We begin with the raw amino-acid sequence, 310 residues long: Olfactory receptor 2A1/2A42 (310 aa).

Over 1–24 (MGENQTMVTEFLLLGFLLGPRIQM) the chain is Extracellular. N-linked (GlcNAc...) asparagine glycosylation is present at asparagine 4. A helical membrane pass occupies residues 25-48 (LLFGLFSLFYIFTLLGNGAILGLI). Topologically, residues 49 to 56 (SLDSRLHT) are cytoplasmic. Residues 57–78 (PMYFFLSHLAVVDIAYTRNTVP) traverse the membrane as a helical segment. Residues 79–99 (QMLANLLHPAKPISFAGCMTQ) are Extracellular-facing. A disulfide bridge connects residues cysteine 96 and cysteine 188. Residues 100-119 (TFLCLSFGHSECLLLVLMSY) traverse the membrane as a helical segment. At 120–138 (DRYVAICHPLRYSVIMTWR) the chain is on the cytoplasmic side. Residues 139 to 157 (VCITLAVTSWTCGSLLALA) form a helical membrane-spanning segment. Residues 158 to 195 (HVVLILRLPFSGPHEINHFFCEILSVLRLACADTWLNQ) lie on the Extracellular side of the membrane. Residues 196–218 (VVIFAACVFFLVGPPSLVLVSYS) form a helical membrane-spanning segment. The Cytoplasmic segment spans residues 219–235 (HILAAILRIQSGEGRRK). A helical membrane pass occupies residues 236–258 (AFSTCSSHLCVVGLFFGSAIIMY). The Extracellular portion of the chain corresponds to 259–271 (MAPKSRHPEEQQK). The chain crosses the membrane as a helical span at residues 272–291 (VFFLFYSFFNPTLNPLIYSL). Residues 292–310 (RNGEVKGALRRALGKESHS) are Cytoplasmic-facing.

It belongs to the G-protein coupled receptor 1 family.

Its subcellular location is the cell membrane. Odorant receptor. This Homo sapiens (Human) protein is Olfactory receptor 2A1/2A42 (OR2A1).